The primary structure comprises 260 residues: MVLIRVLANLLILQLSYAQKSSELIIGGDECNINEHRFLVALYTSRSRRFYCGGTLINQEWVLTAAHCDRKNIRIKLGMHSEKVPNEDAQTRVPKEKFFCLSSKTYTKWDKDIMLMRLKRPVNNSTHIAPVSLPSNPPSVGSVCRVMGWGTITSPQETYPDVPHCANINILDYEVCQAAHGGLPATSRTLCAGILKGGKDSCKGDSGGPLICNGQFQGIASWGAHPCGQSLKPGVYTKVFDYTEWIQSTIAGNTDATCPP.

The first 18 residues, 1–18 (MVLIRVLANLLILQLSYA), serve as a signal peptide directing secretion. A propeptide spanning residues 19-24 (QKSSEL) is cleaved from the precursor. Residues 25-251 (IIGGDECNIN…YTEWIQSTIA (227 aa)) enclose the Peptidase S1 domain. 6 disulfides stabilise this stretch: C31–C165, C52–C68, C100–C258, C144–C212, C176–C191, and C202–C227. Active-site charge relay system residues include H67 and D112. 2 N-linked (GlcNAc...) asparagine glycosylation sites follow: N123 and N124. S206 (charge relay system) is an active-site residue.

The protein belongs to the peptidase S1 family. Snake venom subfamily. In terms of assembly, monomer. As to expression, expressed by the venom gland.

Its subcellular location is the secreted. In terms of biological role, snake venom serine protease that may act in the hemostasis system of the prey. The protein is Snake venom serine protease gussurobin of Gloydius ussuriensis (Ussuri mamushi).